A 356-amino-acid polypeptide reads, in one-letter code: V-type proton ATPase subunit d (356 aa).

It belongs to the V-ATPase V0D/AC39 subunit family. In terms of assembly, V-ATPase is a heteromultimeric enzyme composed of a peripheral catalytic V1 complex (components A to H) attached to an integral membrane V0 proton pore complex (components: a, c, c', c'' and d).

Functionally, subunit of the integral membrane V0 complex of vacuolar ATPase. Vacuolar ATPase is responsible for acidifying a variety of intracellular compartments in eukaryotic cells, thus providing most of the energy required for transport processes in the vacuolar system. The polypeptide is V-type proton ATPase subunit d (vatD-1) (Dictyostelium discoideum (Social amoeba)).